Consider the following 548-residue polypeptide: Fumarate hydratase class I, aerobic (548 aa).

[4Fe-4S] cluster contacts are provided by Cys105, Cys224, and Cys318.

This sequence belongs to the class-I fumarase family. As to quaternary structure, homodimer. [4Fe-4S] cluster is required as a cofactor.

The enzyme catalyses (S)-malate = fumarate + H2O. It catalyses the reaction oxaloacetate = enol-oxaloacetate. It functions in the pathway carbohydrate metabolism; tricarboxylic acid cycle; (S)-malate from fumarate: step 1/1. In terms of biological role, catalyzes the reversible hydration of fumarate to (S)-malate. Functions as an aerobic enzyme in the direction of malate formation as part of the citric acid cycle. Accounts for about 80% of the fumarase activity when the bacteria grow aerobically. To a lesser extent, also displays D-tartrate dehydratase activity in vitro, but is not able to convert (R)-malate, L-tartrate or meso-tartrate. Can also catalyze the isomerization of enol- to keto-oxaloacetate. This is Fumarate hydratase class I, aerobic from Escherichia coli O6:H1 (strain CFT073 / ATCC 700928 / UPEC).